Here is a 196-residue protein sequence, read N- to C-terminus: ATP-dependent Clp protease proteolytic subunit (196 aa).

Ser-96 serves as the catalytic Nucleophile. Residue His-121 is part of the active site.

Belongs to the peptidase S14 family. Fourteen ClpP subunits assemble into 2 heptameric rings which stack back to back to give a disk-like structure with a central cavity, resembling the structure of eukaryotic proteasomes.

The protein localises to the cytoplasm. It catalyses the reaction Hydrolysis of proteins to small peptides in the presence of ATP and magnesium. alpha-casein is the usual test substrate. In the absence of ATP, only oligopeptides shorter than five residues are hydrolyzed (such as succinyl-Leu-Tyr-|-NHMec, and Leu-Tyr-Leu-|-Tyr-Trp, in which cleavage of the -Tyr-|-Leu- and -Tyr-|-Trp bonds also occurs).. In terms of biological role, cleaves peptides in various proteins in a process that requires ATP hydrolysis. Has a chymotrypsin-like activity. Plays a major role in the degradation of misfolded proteins. The polypeptide is ATP-dependent Clp protease proteolytic subunit (Streptococcus uberis (strain ATCC BAA-854 / 0140J)).